We begin with the raw amino-acid sequence, 102 residues long: Large ribosomal subunit protein bL21 (102 aa).

This sequence belongs to the bacterial ribosomal protein bL21 family. Part of the 50S ribosomal subunit. Contacts protein L20.

This protein binds to 23S rRNA in the presence of protein L20. This is Large ribosomal subunit protein bL21 from Bacillus anthracis (strain A0248).